The following is a 310-amino-acid chain: Fructose-bisphosphate aldolase/6-deoxy-5-ketofructose 1-phosphate synthase (310 aa).

Substrate contacts are provided by residues 48-49 (DQ), His-53, Asp-57, and Trp-180. Residue Tyr-182 is the Proton donor of the active site. Residues Arg-184, 213 to 215 (KVN), 241 to 243 (AGG), and 270 to 271 (GR) each bind substrate. The active-site Schiff-base intermediate with dihydroxyacetone-P is the Lys-213. Lys-213 serves as the catalytic Schiff-base intermediate with substrate.

This sequence belongs to the DeoC/FbaB aldolase family.

The catalysed reaction is beta-D-fructose 1,6-bisphosphate = D-glyceraldehyde 3-phosphate + dihydroxyacetone phosphate. It catalyses the reaction beta-D-fructose 1,6-bisphosphate + methylglyoxal = 1-deoxy-D-threo-hexo-2,5-diulose 6-phosphate + D-glyceraldehyde 3-phosphate. It carries out the reaction beta-D-fructose 1-phosphate + methylglyoxal = 1-deoxy-D-threo-hexo-2,5-diulose 6-phosphate + D-glyceraldehyde. It functions in the pathway aromatic compound metabolism. In terms of biological role, catalyzes the transaldolization of either fructose-1-P or fructose-1,6-bisphosphate with methylglyoxal to produce 6-deoxy-5-ketofructose-1-phosphate (DKFP). Also catalyzes the reversible aldol condensation of dihydroxyacetone phosphate (DHAP or glycerone-phosphate) with glyceraldehyde 3-phosphate (G3P or GAP) to produce fructose 1,6-bisphosphate (FBP). The chain is Fructose-bisphosphate aldolase/6-deoxy-5-ketofructose 1-phosphate synthase from Methanocaldococcus jannaschii (strain ATCC 43067 / DSM 2661 / JAL-1 / JCM 10045 / NBRC 100440) (Methanococcus jannaschii).